We begin with the raw amino-acid sequence, 306 residues long: Ribokinase (306 aa).

Substrate is bound by residues 12–14, 40–44, and glutamate 141; these read NAD and GKGAN. ATP contacts are provided by residues asparagine 185 and 221–226; that span reads TLGAKG. K(+) contacts are provided by aspartate 247 and threonine 249. Position 252–253 (252–253) interacts with ATP; sequence GD. Position 253 (aspartate 253) interacts with substrate. Aspartate 253 acts as the Proton acceptor in catalysis. K(+)-binding residues include serine 283, lysine 286, glycine 288, and serine 292.

The protein belongs to the carbohydrate kinase PfkB family. Ribokinase subfamily. Homodimer. Requires Mg(2+) as cofactor.

It localises to the cytoplasm. The catalysed reaction is D-ribose + ATP = D-ribose 5-phosphate + ADP + H(+). Its pathway is carbohydrate metabolism; D-ribose degradation; D-ribose 5-phosphate from beta-D-ribopyranose: step 2/2. Activated by a monovalent cation that binds near, but not in, the active site. The most likely occupant of the site in vivo is potassium. Ion binding induces a conformational change that may alter substrate affinity. In terms of biological role, catalyzes the phosphorylation of ribose at O-5 in a reaction requiring ATP and magnesium. The resulting D-ribose-5-phosphate can then be used either for sythesis of nucleotides, histidine, and tryptophan, or as a component of the pentose phosphate pathway. The chain is Ribokinase from Haemophilus influenzae (strain ATCC 51907 / DSM 11121 / KW20 / Rd).